Reading from the N-terminus, the 303-residue chain is AP2-like ethylene-responsive transcription factor At1g79700 (303 aa).

The segment covering 1–10 (MAKVSGRSKK) has biased composition (basic residues). Positions 1–55 (MAKVSGRSKKTIVDDEISDKTASASESASIALTSKRKRKSPPRNAPLQRSSPYRG) are disordered. Over residues 20–32 (KTASASESASIAL) the composition is skewed to polar residues. 2 consecutive DNA-binding regions (AP2/ERF) follow at residues 52 to 118 (PYRG…LNFP) and 154 to 202 (KYRG…TNFD). Positions 212 to 259 (AADKADSDSKPIRSPSREPESSDDNKSPKSEEVIEPSTSPEVIPTRRS) are disordered. Residues 214–243 (DKADSDSKPIRSPSREPESSDDNKSPKSEE) are compositionally biased toward basic and acidic residues.

The protein belongs to the AP2/ERF transcription factor family. AP2 subfamily.

It is found in the nucleus. Probably acts as a transcriptional activator. Binds to the GCC-box pathogenesis-related promoter element. May be involved in the regulation of gene expression by stress factors and by components of stress signal transduction pathways. In Arabidopsis thaliana (Mouse-ear cress), this protein is AP2-like ethylene-responsive transcription factor At1g79700.